The following is a 366-amino-acid chain: MSENSHIKVIVGMSGGVDSSVSAYLLKQQGYQVEGLFMKNWEEDDNDEYCAAADDLKDAQAVCDKLGIELHTVNFAAEYWDNVFEYFLAEYKAGRTPNPDIMCNKEIKFKAFLEFAAQALGADFIATGHYVRRELRDDKYVMCRGLDDNKDQSYFLYTLSHEHIGQTLFPVGDIAKPEVRRIAEEQDLITHDKKDSTGICFIGERKFKDFLQKFLPAQPGVIEDTDGNNVGEHEGLMYHTLGQRKGLLIGGMKEGSGEPWYVVDKDLERNVLIVGQGKDHPRLYSNGLNANQLHWVDRIGPKGTTRCTVKTRYRQEDLSCTLLVGEDGMARVLFDEPQKAVTPGQSAVFYAEDVCLGGGIIDSVIK.

ATP is bound by residues 12 to 19 (GMSGGVDS) and Met-38. An interaction with target base in tRNA region spans residues 98–100 (NPD). The active-site Nucleophile is the Cys-103. Cys-103 and Cys-200 are joined by a disulfide. Gly-128 lines the ATP pocket. The interaction with tRNA stretch occupies residues 150–152 (KDQ). Catalysis depends on Cys-200, which acts as the Cysteine persulfide intermediate. Residues 312 to 313 (RY) are interaction with tRNA.

This sequence belongs to the MnmA/TRMU family.

The protein resides in the cytoplasm. The enzyme catalyses S-sulfanyl-L-cysteinyl-[protein] + uridine(34) in tRNA + AH2 + ATP = 2-thiouridine(34) in tRNA + L-cysteinyl-[protein] + A + AMP + diphosphate + H(+). In terms of biological role, catalyzes the 2-thiolation of uridine at the wobble position (U34) of tRNA, leading to the formation of s(2)U34. The polypeptide is tRNA-specific 2-thiouridylase MnmA (Pseudoalteromonas translucida (strain TAC 125)).